A 478-amino-acid polypeptide reads, in one-letter code: RNA exonuclease 3 (478 aa).

The 146-residue stretch at Val320 to Ile465 folds into the Exonuclease domain.

The protein belongs to the REXO1/REXO3 family.

The protein localises to the cytoplasm. The protein resides in the nucleus. In terms of biological role, 3' to 5' exoribonuclease required for proper 3' end maturation of MRP RNA and of the U5L snRNA. The polypeptide is RNA exonuclease 3 (REX3) (Kluyveromyces lactis (strain ATCC 8585 / CBS 2359 / DSM 70799 / NBRC 1267 / NRRL Y-1140 / WM37) (Yeast)).